We begin with the raw amino-acid sequence, 193 residues long: Adenine phosphoribosyltransferase (193 aa).

This sequence belongs to the purine/pyrimidine phosphoribosyltransferase family. In terms of assembly, homodimer.

The protein localises to the cytoplasm. The enzyme catalyses AMP + diphosphate = 5-phospho-alpha-D-ribose 1-diphosphate + adenine. Its pathway is purine metabolism; AMP biosynthesis via salvage pathway; AMP from adenine: step 1/1. Catalyzes a salvage reaction resulting in the formation of AMP, that is energically less costly than de novo synthesis. The chain is Adenine phosphoribosyltransferase from Bifidobacterium longum subsp. infantis (strain ATCC 15697 / DSM 20088 / JCM 1222 / NCTC 11817 / S12).